The sequence spans 473 residues: MAVKTYSAGVKEYRQTYWMPEYTPLDTDILACFKITPQAGVDREEAAAAVAAESSTGTWTTVWTDLLTDLDYYKGRAYAIEDVPGDDTCFYAFIAYPIDLFEEGSVVNVFTSLVGNVFGFKAVRALRLEDVRFPIAYVKTCGGPPHGIQVERDVMNKYGRPLLGCTIKPKLGLSAKNYGRAVYECLRGGLDFTKDDENVNSQPFMRWRQRFDFVMEAIQKSERETGERKGHYLNVTAPTPEEMYKRAEYAKEIGAPIIMHDYITGGFCANTGLANWCRDNGMLLHIHRAMHAVLDRNPHHGIHFRVLTKILRLSGGDHLHSGTVVGKLEGDREATLGWIDMMRDSFVKEDRSRGIFFDQDWGSMPGVFPVASGGIHVWHMPALVTIFGDDSVLQFGGGTLGHPWGNAAGAAANRVALEACVEARNKGVAIEKEGKTVLTEAAKNSPELKIAMETWKEIKFEFDTVDKLDVAHK.

Substrate is bound by residues Asn116 and Thr166. The active-site Proton acceptor is Lys168. Substrate is bound at residue Lys170. Mg(2+) contacts are provided by Lys194, Asp196, and Glu197. Lys194 carries the N6-carboxylysine modification. The active-site Proton acceptor is His287. Residues Arg288, His320, and Ser372 each contribute to the substrate site.

It belongs to the RuBisCO large chain family. Type I subfamily. Heterohexadecamer of 8 large chains and 8 small chains. In R.sphaeroides the complex is approximately 500 kDa. Mg(2+) serves as cofactor.

It carries out the reaction 2 (2R)-3-phosphoglycerate + 2 H(+) = D-ribulose 1,5-bisphosphate + CO2 + H2O. The enzyme catalyses D-ribulose 1,5-bisphosphate + O2 = 2-phosphoglycolate + (2R)-3-phosphoglycerate + 2 H(+). In terms of biological role, ruBisCO catalyzes two reactions: the carboxylation of D-ribulose 1,5-bisphosphate, the primary event in carbon dioxide fixation, as well as the oxidative fragmentation of the pentose substrate. Both reactions occur simultaneously and in competition at the same active site. The sequence is that of Ribulose bisphosphate carboxylase large chain from Thiobacillus denitrificans (strain ATCC 25259 / T1).